The chain runs to 1207 residues: DNA-directed RNA polymerase subunit beta' (1207 aa).

Zn(2+)-binding residues include C60, C62, C75, and C78. Mg(2+)-binding residues include D450, D452, and D454. C818, C892, C899, and C902 together coordinate Zn(2+).

It belongs to the RNA polymerase beta' chain family. In terms of assembly, the RNAP catalytic core consists of 2 alpha, 1 beta, 1 beta' and 1 omega subunit. When a sigma factor is associated with the core the holoenzyme is formed, which can initiate transcription. It depends on Mg(2+) as a cofactor. Zn(2+) serves as cofactor.

It carries out the reaction RNA(n) + a ribonucleoside 5'-triphosphate = RNA(n+1) + diphosphate. In terms of biological role, DNA-dependent RNA polymerase catalyzes the transcription of DNA into RNA using the four ribonucleoside triphosphates as substrates. The protein is DNA-directed RNA polymerase subunit beta' of Lactococcus lactis subsp. cremoris (strain SK11).